The chain runs to 345 residues: Pectin lyase (345 aa).

The N-terminal stretch at 1–24 (MKRFCLWFAVFSLLLVLLPGKAFG) is a signal peptide. The active site involves R234.

It belongs to the polysaccharide lyase 1 family.

It localises to the secreted. It carries out the reaction Eliminative cleavage of (1-&gt;4)-alpha-D-galacturonan methyl ester to give oligosaccharides with 4-deoxy-6-O-methyl-alpha-D-galact-4-enuronosyl groups at their non-reducing ends.. With respect to regulation, inhibited by Hg(2+) and Mn(2+). Not affected by EDTA in vitro. Functionally, catalyzes the depolymerization of pectins of methyl esterification degree from 13 to 75%, with an endo mode of action. Cannot degrade polygalacturonate. Also displays protopectinase activity, i.e. releases pectin from protopectin. The sequence is that of Pectin lyase (pelB) from Bacillus subtilis.